The sequence spans 317 residues: Phospho-N-acetylmuramoyl-pentapeptide-transferase (317 aa).

9 helical membrane passes run 6–26 (IVMA…IIIP), 52–72 (PTIG…IMVG), 78–98 (AMIA…DDLL), 114–134 (MILL…YIGT), 145–165 (INFG…VTNA), 171–191 (GLDG…GIIS), 194–214 (LGHI…LAFL), 223–244 (VFMG…ALIL), and 297–317 (KIVS…FASL).

This sequence belongs to the glycosyltransferase 4 family. MraY subfamily. Requires Mg(2+) as cofactor.

It localises to the cell membrane. It carries out the reaction UDP-N-acetyl-alpha-D-muramoyl-L-alanyl-gamma-D-glutamyl-meso-2,6-diaminopimeloyl-D-alanyl-D-alanine + di-trans,octa-cis-undecaprenyl phosphate = di-trans,octa-cis-undecaprenyl diphospho-N-acetyl-alpha-D-muramoyl-L-alanyl-D-glutamyl-meso-2,6-diaminopimeloyl-D-alanyl-D-alanine + UMP. Its pathway is cell wall biogenesis; peptidoglycan biosynthesis. Functionally, catalyzes the initial step of the lipid cycle reactions in the biosynthesis of the cell wall peptidoglycan: transfers peptidoglycan precursor phospho-MurNAc-pentapeptide from UDP-MurNAc-pentapeptide onto the lipid carrier undecaprenyl phosphate, yielding undecaprenyl-pyrophosphoryl-MurNAc-pentapeptide, known as lipid I. The polypeptide is Phospho-N-acetylmuramoyl-pentapeptide-transferase (Clostridium perfringens (strain 13 / Type A)).